We begin with the raw amino-acid sequence, 122 residues long: Acidic phospholipase A2 CbIalpha (122 aa).

Intrachain disulfides connect Cys-26-Cys-115, Cys-28-Cys-44, Cys-43-Cys-95, Cys-49-Cys-122, Cys-50-Cys-88, Cys-57-Cys-81, and Cys-75-Cys-86. Tyr-27, Gly-29, and Gly-31 together coordinate Ca(2+). His-47 is an active-site residue. Residue Asp-48 participates in Ca(2+) binding. Residue Asp-89 is part of the active site.

Belongs to the phospholipase A2 family. Group II subfamily. D49 sub-subfamily. Heterodimer of an acidic subunit (CbIalpha or CbIbeta) and a basic subunit (CbII). The acidic subunit is non-toxic, and increases the toxicity of the basic subunit. The cofactor is Ca(2+). In terms of tissue distribution, expressed by the venom gland.

It is found in the secreted. The catalysed reaction is a 1,2-diacyl-sn-glycero-3-phosphocholine + H2O = a 1-acyl-sn-glycero-3-phosphocholine + a fatty acid + H(+). Heterodimer: presynaptic neurotoxin. In terms of biological role, monomer: Snake venom phospholipase A2 (PLA2) is inactive towards micellar phosphatidylcholine but is weakly active towards non-micellar dithiolecithin. PLA2 catalyzes the calcium-dependent hydrolysis of the 2-acyl groups in 3-sn-phosphoglycerides. The sequence is that of Acidic phospholipase A2 CbIalpha from Pseudocerastes fieldi (Field's horned viper).